The primary structure comprises 652 residues: Acetyl-coenzyme A synthetase (652 aa).

CoA contacts are provided by residues Arg191–Arg194, Thr311, and Asn335. ATP contacts are provided by residues Gly387–Pro389, Asp411–Thr416, Asp500, and Arg515. A CoA-binding site is contributed by Ser523. Residue Arg526 coordinates ATP. Mg(2+) contacts are provided by Val537, His539, and Ile542. Residue Arg584 participates in CoA binding. Lys609 bears the N6-acetyllysine mark.

It belongs to the ATP-dependent AMP-binding enzyme family. Mg(2+) is required as a cofactor. Acetylated. Deacetylation by the SIR2-homolog deacetylase activates the enzyme.

The enzyme catalyses acetate + ATP + CoA = acetyl-CoA + AMP + diphosphate. In terms of biological role, catalyzes the conversion of acetate into acetyl-CoA (AcCoA), an essential intermediate at the junction of anabolic and catabolic pathways. Acs undergoes a two-step reaction. In the first half reaction, Acs combines acetate with ATP to form acetyl-adenylate (AcAMP) intermediate. In the second half reaction, it can then transfer the acetyl group from AcAMP to the sulfhydryl group of CoA, forming the product AcCoA. Enables the cell to use acetate during aerobic growth to generate energy via the TCA cycle, and biosynthetic compounds via the glyoxylate shunt. Acetylates CheY, the response regulator involved in flagellar movement and chemotaxis. The sequence is that of Acetyl-coenzyme A synthetase from Yersinia pseudotuberculosis serotype I (strain IP32953).